Reading from the N-terminus, the 732-residue chain is Catalase-peroxidase (732 aa).

A cross-link (tryptophyl-tyrosyl-methioninium (Trp-Tyr) (with M-245)) is located at residues 96–219 (WHSAGTYRIG…LGAVQMGLIY (124 aa)). Catalysis depends on His97, which acts as the Proton acceptor. The tryptophyl-tyrosyl-methioninium (Tyr-Met) (with W-96) cross-link spans 219 to 245 (YVNPEGPNGHPDPVASGRDIRETFGRM). His260 contacts heme b.

The protein belongs to the peroxidase family. Peroxidase/catalase subfamily. As to quaternary structure, homodimer or homotetramer. The cofactor is heme b. Formation of the three residue Trp-Tyr-Met cross-link is important for the catalase, but not the peroxidase activity of the enzyme.

It catalyses the reaction H2O2 + AH2 = A + 2 H2O. It carries out the reaction 2 H2O2 = O2 + 2 H2O. In terms of biological role, bifunctional enzyme with both catalase and broad-spectrum peroxidase activity. The sequence is that of Catalase-peroxidase from Acaryochloris marina (strain MBIC 11017).